Consider the following 206-residue polypeptide: Large ribosomal subunit protein mL62 (206 aa).

The transit peptide at 1–29 (MAATRCLRWGLSRAGVWLLPPPARCPRRA) directs the protein to the mitochondrion. Position 90 is an N5-methylglutamine (Q90).

It belongs to the prokaryotic/mitochondrial release factor family. Mitochondrion-specific ribosomal protein mL62 subfamily. In terms of assembly, component of the mitochondrial large ribosomal subunit (mt-LSU). Mature mammalian 55S mitochondrial ribosomes consist of a small (28S) and a large (39S) subunit. The 28S small subunit contains a 12S ribosomal RNA (12S mt-rRNA) and 30 different proteins. The 39S large subunit contains a 16S rRNA (16S mt-rRNA), a copy of mitochondrial valine transfer RNA (mt-tRNA(Val)), which plays an integral structural role, and 52 different proteins. Methylation of glutamine in the GGQ triplet by HEMK1. As to expression, down-regulated during the in vitro differentiation of HT29-D4 colon carcinoma cells.

Its subcellular location is the mitochondrion. It catalyses the reaction an N-acyl-L-alpha-aminoacyl-tRNA + H2O = an N-acyl-L-amino acid + a tRNA + H(+). Functionally, essential peptidyl-tRNA hydrolase component of the mitochondrial large ribosomal subunit. Acts as a codon-independent translation release factor that has lost all stop codon specificity and directs the termination of translation in mitochondrion, possibly in case of abortive elongation. Involved in the hydrolysis of peptidyl-tRNAs that have been prematurely terminated and thus in the recycling of stalled mitochondrial ribosomes. In Homo sapiens (Human), this protein is Large ribosomal subunit protein mL62.